We begin with the raw amino-acid sequence, 208 residues long: MASPLPVRAAALSRDTNETSIQIALSIDGGELPQDADPRLLEASSAHASQTSKSQVISINTGIGFLDHMLHALAKHAGWSMALNCKGDLHIDDHHTAEDCCIAVGTTFAKALGALTGVARFGYAYAPLDEALSRAVVDLSNRPYTVVDLGLKREKLGELSCEMIPHCLQSFAQAARITLHVDCLRGDNDHHRAESAFKALAVAVRWYD.

It belongs to the imidazoleglycerol-phosphate dehydratase family.

It carries out the reaction D-erythro-1-(imidazol-4-yl)glycerol 3-phosphate = 3-(imidazol-4-yl)-2-oxopropyl phosphate + H2O. It functions in the pathway amino-acid biosynthesis; L-histidine biosynthesis; L-histidine from 5-phospho-alpha-D-ribose 1-diphosphate: step 6/9. The polypeptide is Imidazoleglycerol-phosphate dehydratase (his3) (Trichoderma harzianum (Hypocrea lixii)).